A 159-amino-acid polypeptide reads, in one-letter code: Endoribonuclease YbeY (159 aa).

The Zn(2+) site is built by histidine 125, histidine 129, and histidine 135.

This sequence belongs to the endoribonuclease YbeY family. The cofactor is Zn(2+).

Its subcellular location is the cytoplasm. In terms of biological role, single strand-specific metallo-endoribonuclease involved in late-stage 70S ribosome quality control and in maturation of the 3' terminus of the 16S rRNA. This chain is Endoribonuclease YbeY, found in Lactiplantibacillus plantarum (strain ATCC BAA-793 / NCIMB 8826 / WCFS1) (Lactobacillus plantarum).